The following is a 468-amino-acid chain: Anthocyanidin 3-O-glucoside 2'''-O-xylosyltransferase (468 aa).

UDP-alpha-D-xylose contacts are provided by residues serine 284, 344-346, 361-369, and 383-386; these read IQQ, HCGFGSMWE, and HGEQ.

Belongs to the UDP-glycosyltransferase family.

The catalysed reaction is an anthocyanidin 3-O-beta-D-glucoside + UDP-alpha-D-xylose = an anthocyanidin 3-O-beta-D-sambubioside + UDP + 2 H(+). Its pathway is secondary metabolite biosynthesis; flavonoid biosynthesis. In terms of biological role, contributes to the last few anthocyanin biosynthetic steps. Converts cyanidin 3-O-glucoside to cyanidin 3-O-xylosyl(1-&gt;2)glucoside. Can use 3-O-glucosylated anthocyanidins/flavonols and uridine diphosphate (UDP)-xylose as substrates. The chain is Anthocyanidin 3-O-glucoside 2'''-O-xylosyltransferase (A3G2XYLT) from Arabidopsis thaliana (Mouse-ear cress).